The primary structure comprises 72 residues: Mitochondrial import protein 2 (72 aa).

The disordered stretch occupies residues 1–22 (MAEVLDLEIDPISDGEDDTYSS). Over 1 to 34 (MAEVLDLEIDPISDGEDDTYSSELDDDLKDSIEQ) the chain is Cytoplasmic. Residues 35-52 (LERVLCLVVFPLLGKFLG) traverse the membrane as a helical segment. At 53–72 (RKFAFHAWARWLERRRLVSN) the chain is on the mitochondrial intermembrane side.

It belongs to the MIM2 family. In terms of assembly, component of the mitochondrial outer import machinery (MIM) complex containing at least mim1 and mim2. Interacts with mim1. Interacts with mitophagy receptor atg43.

It localises to the mitochondrion outer membrane. In terms of biological role, component of the mitochondrial outer import machinery (MIM) complex that mediates transport of proteins into mitochondrial compartments. Promotes the insertion of tom70 into the outer mitochondrial membrane. Promotes the insertion of atg43 into the outer mitochondrial membrane. Involved in import of the subset of proteins with multiple alpha-helical transmembrane segments. In Schizosaccharomyces pombe (strain 972 / ATCC 24843) (Fission yeast), this protein is Mitochondrial import protein 2.